A 99-amino-acid chain; its full sequence is MMNMQNMMKQAQKLQKQMEQKQADLAAMQFTGKSAQDLVTATFTGDKKLVGIDFKEAVVDPEDVETLQDMTTQAINDALTQIDEATKKTLGAFAGKLPF.

Belongs to the YbaB/EbfC family. As to quaternary structure, homodimer.

It is found in the cytoplasm. Its subcellular location is the nucleoid. In terms of biological role, binds to DNA and alters its conformation. May be involved in regulation of gene expression, nucleoid organization and DNA protection. This Streptococcus pyogenes serotype M12 (strain MGAS2096) protein is Nucleoid-associated protein MGAS2096_Spy1605.